The sequence spans 299 residues: GTPase Era (299 aa).

The Era-type G domain occupies 4 to 171 (KSGFVAILGR…VDILSENLDE (168 aa)). The segment at 12-19 (GRPNVGKS) is G1. 12-19 (GRPNVGKS) provides a ligand contact to GTP. A G2 region spans residues 38–42 (QTTRN). The tract at residues 59-62 (DTPG) is G3. GTP-binding positions include 59 to 63 (DTPGI) and 121 to 124 (NKID). The interval 121–124 (NKID) is G4. The interval 150 to 152 (ISA) is G5. Positions 202-280 (TREEIPHSVA…FLETWVKVKK (79 aa)) constitute a KH type-2 domain.

It belongs to the TRAFAC class TrmE-Era-EngA-EngB-Septin-like GTPase superfamily. Era GTPase family. As to quaternary structure, monomer.

The protein localises to the cytoplasm. Its subcellular location is the cell membrane. Its function is as follows. An essential GTPase that binds both GDP and GTP, with rapid nucleotide exchange. Plays a role in 16S rRNA processing and 30S ribosomal subunit biogenesis and possibly also in cell cycle regulation and energy metabolism. In Streptococcus pneumoniae (strain P1031), this protein is GTPase Era.